Reading from the N-terminus, the 65-residue chain is Large ribosomal subunit protein uL30 (65 aa).

The protein belongs to the universal ribosomal protein uL30 family. In terms of assembly, part of the 50S ribosomal subunit.

In Rickettsia bellii (strain OSU 85-389), this protein is Large ribosomal subunit protein uL30.